The following is a 342-amino-acid chain: Endo-1,4-beta-xylanase A (342 aa).

The region spanning Glu-11–Phe-342 is the GH10 domain. Glu-144 acts as the Proton donor in catalysis. Glu-252 functions as the Nucleophile in the catalytic mechanism.

It belongs to the glycosyl hydrolase 10 (cellulase F) family. Cytoplasmic xylanase subfamily.

It is found in the cytoplasm. The enzyme catalyses Endohydrolysis of (1-&gt;4)-beta-D-xylosidic linkages in xylans.. It functions in the pathway glycan degradation; xylan degradation. The sequence is that of Endo-1,4-beta-xylanase A (xynA) from Caldicellulosiruptor saccharolyticus (Caldocellum saccharolyticum).